The following is a 906-amino-acid chain: MTSLDSFKCKKTLKVGAKTYVYYSLPTAEKNGLKGISKLPYSMKVLLENLLRNEDGRSVKKADIVAVSKWLRKKSLEHEIAFRPARVLMQDFTGVPAVVDLAAMRNAMQKLGGDAEKINPLVPVDLVIDHSVIVNFFGDNKAFAKNVTEEYKQNQERYEFLKWGQAAFSNFSVVPPGTGICHQVNLEYLSQTVWTKKEKMTVGKKTGTFEVAYPDSLVGTDSHTTMVNGLAVLGWGVGGIEAEACMLGQPLSMLLPNVVGFKLKGAMKEGVTATDLVLTVTQMLRKLGVVGKFVEFFGPGLDHLSVADKATIANMAPEYGATCGFFPVDAAAIDYLKTSGRAAPRVALVQAYAKAQGLFRTAKSADPVFTETLTLDLADVVPSMAGPKRPEGRIALPSVAEGFSVALANEYKKTEEPAKRFAVEGKKYEIGHGDVVIAAITSCTNTSNPSVLIGAGLLARNAAAKGLKAKPWVKTSLAPGSQVVAAYLADSGLQAHLDKVGFNLVGFGCTTCIGNSGPLPEEISKSINDNGIVAAAVLSGNRNFEGRVSPDVQANYLASPPLVVAHALAGSVTKNLAVEPLGEGKDGKPVYLKDIWPTSKEINAFMKKFVTASIFKKKYADVFKGDTNWRKIKTVESETYRWNMSSTYVQNPPYFEGMKKEPEPVTDIVEARILAMFGDKITTDHISPAGSIKLTSPAGKYLSEHQVRPADFNQYGTRRGNHEVMMRGTFANIRIKNFMLKGADGNIPEGGLTKHWPDGEQMSIYDAAMKYQQEQVPLVVFAGAEYGNGSSRDWAAKGTRLLGVRAVICQSFERIHRSNLVGMGVLPLTFEEGTSWSSLGLKGDEKVTLRGLVGDLKPRQKLTAEIVSGDGSLQRVSLLCRIDTLDELDYYRNGGILHYVLRKLAA.

Positions 443, 509, and 512 each coordinate [4Fe-4S] cluster.

This sequence belongs to the aconitase/IPM isomerase family. Monomer. It depends on [4Fe-4S] cluster as a cofactor.

The enzyme catalyses citrate = D-threo-isocitrate. The catalysed reaction is (2S,3R)-3-hydroxybutane-1,2,3-tricarboxylate = 2-methyl-cis-aconitate + H2O. It functions in the pathway carbohydrate metabolism; tricarboxylic acid cycle; isocitrate from oxaloacetate: step 2/2. It participates in organic acid metabolism; propanoate degradation. Functionally, involved in the catabolism of short chain fatty acids (SCFA) via the tricarboxylic acid (TCA)(acetyl degradation route) and probably via the 2-methylcitrate cycle I (propionate degradation route). Catalyzes the reversible isomerization of citrate to isocitrate via cis-aconitate. Could catalyze the hydration of 2-methyl-cis-aconitate to yield (2R,3S)-2-methylisocitrate. The apo form of AcnA functions as a RNA-binding regulatory protein. This is Aconitate hydratase A from Bradyrhizobium diazoefficiens (strain JCM 10833 / BCRC 13528 / IAM 13628 / NBRC 14792 / USDA 110).